Reading from the N-terminus, the 103-residue chain is Urease subunit beta (103 aa).

Belongs to the urease beta subunit family. In terms of assembly, heterotrimer of UreA (gamma), UreB (beta) and UreC (alpha) subunits. Three heterotrimers associate to form the active enzyme.

It localises to the cytoplasm. It catalyses the reaction urea + 2 H2O + H(+) = hydrogencarbonate + 2 NH4(+). Its pathway is nitrogen metabolism; urea degradation; CO(2) and NH(3) from urea (urease route): step 1/1. In Mycobacterium marinum (strain ATCC BAA-535 / M), this protein is Urease subunit beta.